Reading from the N-terminus, the 124-residue chain is Small ribosomal subunit protein uS12 (124 aa).

Asp89 carries the 3-methylthioaspartic acid modification. The disordered stretch occupies residues 105 to 124; it reads AGVKDRKKGRSKYGAKRPKA. The span at 109-124 shows a compositional bias: basic residues; it reads DRKKGRSKYGAKRPKA.

Belongs to the universal ribosomal protein uS12 family. As to quaternary structure, part of the 30S ribosomal subunit. Contacts proteins S8 and S17. May interact with IF1 in the 30S initiation complex.

With S4 and S5 plays an important role in translational accuracy. Functionally, interacts with and stabilizes bases of the 16S rRNA that are involved in tRNA selection in the A site and with the mRNA backbone. Located at the interface of the 30S and 50S subunits, it traverses the body of the 30S subunit contacting proteins on the other side and probably holding the rRNA structure together. The combined cluster of proteins S8, S12 and S17 appears to hold together the shoulder and platform of the 30S subunit. The chain is Small ribosomal subunit protein uS12 from Dichelobacter nodosus (strain VCS1703A).